The chain runs to 354 residues: 3-isopropylmalate dehydrogenase (354 aa).

74-87 contributes to the NAD(+) binding site; sequence GPKWDDLPPEKRPE. Arg-95, Arg-105, Arg-134, and Asp-219 together coordinate substrate. 3 residues coordinate Mg(2+): Asp-219, Asp-243, and Asp-247. Residue 275–287 coordinates NAD(+); it reads GSAPDIAGKNIAN.

It belongs to the isocitrate and isopropylmalate dehydrogenases family. LeuB type 1 subfamily. Homodimer. Requires Mg(2+) as cofactor. It depends on Mn(2+) as a cofactor.

It is found in the cytoplasm. The catalysed reaction is (2R,3S)-3-isopropylmalate + NAD(+) = 4-methyl-2-oxopentanoate + CO2 + NADH. Its pathway is amino-acid biosynthesis; L-leucine biosynthesis; L-leucine from 3-methyl-2-oxobutanoate: step 3/4. In terms of biological role, catalyzes the oxidation of 3-carboxy-2-hydroxy-4-methylpentanoate (3-isopropylmalate) to 3-carboxy-4-methyl-2-oxopentanoate. The product decarboxylates to 4-methyl-2 oxopentanoate. This Thermotoga maritima (strain ATCC 43589 / DSM 3109 / JCM 10099 / NBRC 100826 / MSB8) protein is 3-isopropylmalate dehydrogenase (leuB).